The sequence spans 643 residues: MNANPKFLSADAHVDEAAVAPLPNSRKVYVTGSRADIRVPMREISQADTPDSFGGEKNPPVYVYDTSGPYSDPEAKIDIRAGLPALRQAWIEERGDTEALTGLSSDFSRERAADTATADLRFKGLHRTPRRAIAGKNVSQMHYARKGIITPEMEYIAIRENQRRAEYLESLKTSGPNGEKLAAMMGRQHPGQAFGASAFGPNGLTAITPEFVREEVARGRAIIPNNINHPESEPMIIGRNFLVKVNANIGNSAVTSSIGEEVDKMTWAIRWGGDTVMDLSTGKHIHETREWIIRNSPVPIGTVPIYQALEKVNGKAEDLTWEIFRDTLIEQAEQGVDYFTIHAGVRLQYVPLTAKRMTGIVSRGGSIMAKWCLAHHKESFLYEHFEDICEIMKAYDVAFSLGDGLRPGSIYDANDEAQLGELKTLGELTQIAWKHDVQTMIEGPGHVPMQLIKENMDLQLEWCDEAPFYTLGPLTTDIAPGYDHITSGIGAAMIGWFGTAMLCYVTPKEHLGLPNKDDVKTGIITYKLAAHAADLAKGHPGAQVRDNALSKARFEFRWEDQFNLGLDPDKAREFHDETLPKDSAKVAHFCSMCGPHFCSMKITQDVREFAAQQGVTDDEALKKGMEVKSIEFMKKGAEIYQRQ.

Substrate-binding positions include N248, M277, Y306, H342, 362–364 (SRG), 403–406 (DGLR), and E442. H446 contributes to the Zn(2+) binding site. Y469 contacts substrate. Residue H510 participates in Zn(2+) binding. The [4Fe-4S] cluster site is built by C590, C593, and C598.

The protein belongs to the ThiC family. Homodimer. Requires [4Fe-4S] cluster as cofactor.

The enzyme catalyses 5-amino-1-(5-phospho-beta-D-ribosyl)imidazole + S-adenosyl-L-methionine = 4-amino-2-methyl-5-(phosphooxymethyl)pyrimidine + CO + 5'-deoxyadenosine + formate + L-methionine + 3 H(+). Its pathway is cofactor biosynthesis; thiamine diphosphate biosynthesis. Catalyzes the synthesis of the hydroxymethylpyrimidine phosphate (HMP-P) moiety of thiamine from aminoimidazole ribotide (AIR) in a radical S-adenosyl-L-methionine (SAM)-dependent reaction. The protein is Phosphomethylpyrimidine synthase of Paraburkholderia phytofirmans (strain DSM 17436 / LMG 22146 / PsJN) (Burkholderia phytofirmans).